Here is a 270-residue protein sequence, read N- to C-terminus: Putative pyruvate, phosphate dikinase regulatory protein 2 (270 aa).

ADP is bound at residue 151–158 (GVSRTSKT).

Belongs to the pyruvate, phosphate/water dikinase regulatory protein family. PDRP subfamily.

It carries out the reaction N(tele)-phospho-L-histidyl/L-threonyl-[pyruvate, phosphate dikinase] + ADP = N(tele)-phospho-L-histidyl/O-phospho-L-threonyl-[pyruvate, phosphate dikinase] + AMP + H(+). The enzyme catalyses N(tele)-phospho-L-histidyl/O-phospho-L-threonyl-[pyruvate, phosphate dikinase] + phosphate + H(+) = N(tele)-phospho-L-histidyl/L-threonyl-[pyruvate, phosphate dikinase] + diphosphate. Its function is as follows. Bifunctional serine/threonine kinase and phosphorylase involved in the regulation of the pyruvate, phosphate dikinase (PPDK) by catalyzing its phosphorylation/dephosphorylation. This chain is Putative pyruvate, phosphate dikinase regulatory protein 2, found in Listeria monocytogenes serotype 4b (strain F2365).